A 344-amino-acid polypeptide reads, in one-letter code: Heat-inducible transcription repressor HrcA (344 aa).

It belongs to the HrcA family.

Negative regulator of class I heat shock genes (grpE-dnaK-dnaJ and groELS operons). Prevents heat-shock induction of these operons. The chain is Heat-inducible transcription repressor HrcA from Streptococcus agalactiae serotype Ia (strain ATCC 27591 / A909 / CDC SS700).